A 119-amino-acid chain; its full sequence is Large ribosomal subunit protein uL18 (119 aa).

It belongs to the universal ribosomal protein uL18 family. Part of the 50S ribosomal subunit; part of the 5S rRNA/L5/L18/L25 subcomplex. Contacts the 5S and 23S rRNAs.

This is one of the proteins that bind and probably mediate the attachment of the 5S RNA into the large ribosomal subunit, where it forms part of the central protuberance. The polypeptide is Large ribosomal subunit protein uL18 (Clostridium botulinum (strain Alaska E43 / Type E3)).